We begin with the raw amino-acid sequence, 445 residues long: Phosphoglucosamine mutase (445 aa).

S102 (phosphoserine intermediate) is an active-site residue. The Mg(2+) site is built by S102, D241, D243, and D245. At S102 the chain carries Phosphoserine.

It belongs to the phosphohexose mutase family. Requires Mg(2+) as cofactor. In terms of processing, activated by phosphorylation.

The catalysed reaction is alpha-D-glucosamine 1-phosphate = D-glucosamine 6-phosphate. Its function is as follows. Catalyzes the conversion of glucosamine-6-phosphate to glucosamine-1-phosphate. This Shewanella sp. (strain W3-18-1) protein is Phosphoglucosamine mutase.